A 300-amino-acid polypeptide reads, in one-letter code: Ribosomal protein L11 methyltransferase (300 aa).

Residues threonine 152, glycine 173, aspartate 195, and asparagine 234 each coordinate S-adenosyl-L-methionine.

It belongs to the methyltransferase superfamily. PrmA family.

It localises to the cytoplasm. It catalyses the reaction L-lysyl-[protein] + 3 S-adenosyl-L-methionine = N(6),N(6),N(6)-trimethyl-L-lysyl-[protein] + 3 S-adenosyl-L-homocysteine + 3 H(+). Functionally, methylates ribosomal protein L11. In Burkholderia vietnamiensis (strain G4 / LMG 22486) (Burkholderia cepacia (strain R1808)), this protein is Ribosomal protein L11 methyltransferase.